Reading from the N-terminus, the 611-residue chain is Dihydroxy-acid dehydratase (611 aa).

Mg(2+) is bound at residue aspartate 81. Cysteine 122 serves as a coordination point for [2Fe-2S] cluster. Residues aspartate 123 and lysine 124 each contribute to the Mg(2+) site. The residue at position 124 (lysine 124) is an N6-carboxylysine. Cysteine 195 lines the [2Fe-2S] cluster pocket. Glutamate 491 is a Mg(2+) binding site. Serine 517 acts as the Proton acceptor in catalysis.

This sequence belongs to the IlvD/Edd family. As to quaternary structure, homodimer. [2Fe-2S] cluster serves as cofactor. It depends on Mg(2+) as a cofactor.

It catalyses the reaction (2R)-2,3-dihydroxy-3-methylbutanoate = 3-methyl-2-oxobutanoate + H2O. The catalysed reaction is (2R,3R)-2,3-dihydroxy-3-methylpentanoate = (S)-3-methyl-2-oxopentanoate + H2O. The protein operates within amino-acid biosynthesis; L-isoleucine biosynthesis; L-isoleucine from 2-oxobutanoate: step 3/4. Its pathway is amino-acid biosynthesis; L-valine biosynthesis; L-valine from pyruvate: step 3/4. In terms of biological role, functions in the biosynthesis of branched-chain amino acids. Catalyzes the dehydration of (2R,3R)-2,3-dihydroxy-3-methylpentanoate (2,3-dihydroxy-3-methylvalerate) into 2-oxo-3-methylpentanoate (2-oxo-3-methylvalerate) and of (2R)-2,3-dihydroxy-3-methylbutanoate (2,3-dihydroxyisovalerate) into 2-oxo-3-methylbutanoate (2-oxoisovalerate), the penultimate precursor to L-isoleucine and L-valine, respectively. In Pasteurella multocida (strain Pm70), this protein is Dihydroxy-acid dehydratase.